The primary structure comprises 125 residues: Holo-[acyl-carrier-protein] synthase (125 aa).

2 residues coordinate Mg(2+): Asp8 and Glu57.

This sequence belongs to the P-Pant transferase superfamily. AcpS family. The cofactor is Mg(2+).

It is found in the cytoplasm. It carries out the reaction apo-[ACP] + CoA = holo-[ACP] + adenosine 3',5'-bisphosphate + H(+). Its function is as follows. Transfers the 4'-phosphopantetheine moiety from coenzyme A to a Ser of acyl-carrier-protein. This Aromatoleum aromaticum (strain DSM 19018 / LMG 30748 / EbN1) (Azoarcus sp. (strain EbN1)) protein is Holo-[acyl-carrier-protein] synthase.